The sequence spans 669 residues: L-type lectin-domain containing receptor kinase IV.4 (669 aa).

The first 23 residues, 1–23 (MFFIKLFTIFFLSFFWQSLKSSS), serve as a signal peptide directing secretion. At 24–294 (QIIDFTYNGF…TRVYRFYKNW (271 aa)) the chain is on the extracellular side. Positions 26–260 (IDFTYNGFRP…SEIFVLGWSF (235 aa)) are legume-lectin like. N-linked (GlcNAc...) asparagine glycans are attached at residues Asn-58, Asn-80, Asn-127, Asn-152, and Asn-185. The helical transmembrane segment at 295-315 (VPLISLLLIPFLLIIFLVRFI) threads the bilayer. The Cytoplasmic portion of the chain corresponds to 316-669 (MKRRRKFAEE…VAYSLLSSGR (354 aa)). In terms of domain architecture, Protein kinase spans 350–627 (FKDKNILGSG…LQYLRGDAML (278 aa)). Residues 356–364 (LGSGGFGSV) and Lys-379 contribute to the ATP site. The active-site Proton acceptor is Asp-475.

This sequence in the C-terminal section; belongs to the protein kinase superfamily. Ser/Thr protein kinase family. It in the N-terminal section; belongs to the leguminous lectin family.

It localises to the cell membrane. It catalyses the reaction L-seryl-[protein] + ATP = O-phospho-L-seryl-[protein] + ADP + H(+). The enzyme catalyses L-threonyl-[protein] + ATP = O-phospho-L-threonyl-[protein] + ADP + H(+). Its function is as follows. Involved in resistance response to the pathogenic oomycetes Phytophthora infestans and Phytophthora capsici and to the pathogenic bacteria Pseudomonas syringae. This chain is L-type lectin-domain containing receptor kinase IV.4, found in Arabidopsis thaliana (Mouse-ear cress).